The sequence spans 268 residues: tRNA (guanine-N(7)-)-methyltransferase (268 aa).

The disordered stretch occupies residues 1-21 (MMAGAEAPQPQKRYYRQRAHS). Ser21 is subject to Phosphoserine. 6 residues coordinate S-adenosyl-L-methionine: Gly78, Glu101, Arg103, Asn134, Ala135, and Leu154. Asp157 is a catalytic residue. The alphaC helix stretch occupies residues 158-166 (PHFKRTKHK). Thr232 and Glu234 together coordinate S-adenosyl-L-methionine. Residues 232 to 240 (TEEGKKVLR) form an alpha6 helix region.

Belongs to the class I-like SAM-binding methyltransferase superfamily. TrmB family. In terms of assembly, catalytic component of the METTL1-WDR4 complex, composed of METTL1 and WDR4. In terms of processing, phosphorylation at Ser-21 by PKB/AKT1 inactivates its methyltransferase activity via a steric interference mechanism in the active site that locally disrupts the catalytic center. Phosphorylation at Ser-21 does not affect the interaction with WDR4.

The protein resides in the nucleus. The catalysed reaction is guanosine(46) in tRNA + S-adenosyl-L-methionine = N(7)-methylguanosine(46) in tRNA + S-adenosyl-L-homocysteine. It carries out the reaction a guanosine in mRNA + S-adenosyl-L-methionine = an N(7)-methylguanosine in mRNA + S-adenosyl-L-homocysteine. The enzyme catalyses a guanosine in miRNA + S-adenosyl-L-methionine = an N(7)-methylguanosine in miRNA + S-adenosyl-L-homocysteine. Its pathway is tRNA modification; N(7)-methylguanine-tRNA biosynthesis. In terms of biological role, catalytic component of METTL1-WDR4 methyltransferase complex that mediates the formation of N(7)-methylguanine in a subset of RNA species, such as tRNAs, mRNAs and microRNAs (miRNAs). Catalyzes the formation of N(7)-methylguanine at position 46 (m7G46) in a large subset of tRNAs that contain the 5'-RAGGU-3' motif within the variable loop. M7G46 interacts with C13-G22 in the D-loop to stabilize tRNA tertiary structure and protect tRNAs from decay. Also acts as a methyltransferase for a subset of internal N(7)-methylguanine in mRNAs. Internal N(7)-methylguanine methylation of mRNAs in response to stress promotes their relocalization to stress granules, thereby suppressing their translation. Also methylates a specific subset of miRNAs, such as let-7. N(7)-methylguanine methylation of let-7 miRNA promotes let-7 miRNA processing by disrupting an inhibitory secondary structure within the primary miRNA transcript (pri-miRNA). Acts as a regulator of embryonic stem cell self-renewal and differentiation. The sequence is that of tRNA (guanine-N(7)-)-methyltransferase from Mus musculus (Mouse).